The following is a 244-amino-acid chain: Electron transfer flavoprotein beta subunit lysine methyltransferase homolog (244 aa).

This sequence belongs to the methyltransferase superfamily. ETFBKMT family.

Its function is as follows. Probable methyltransferase. The protein is Electron transfer flavoprotein beta subunit lysine methyltransferase homolog of Caenorhabditis elegans.